The sequence spans 300 residues: Protein YIF1B-B (300 aa).

Positions 1 to 46 (MNQESSFRAPPKRRVRGSNPNISNPHQLFDDTSGGPVPHGGDFPNH) are disordered. Over 1 to 142 (MNQESSFRAP…APRFDINAPD (142 aa)) the chain is Cytoplasmic. The chain crosses the membrane as a helical span at residues 143 to 163 (LYIPVMAFITYILVAGLALGT). Residues 164 to 178 (QSRFSPEILGMQASS) lie on the Extracellular side of the membrane. Residues 179-199 (ALAWLIVEVLAILLSLYLVTV) form a helical membrane-spanning segment. The Cytoplasmic segment spans residues 200–205 (NTDLTT). The helical transmembrane segment at 206 to 226 (VDLVAFSGYKYVGMISGVIAG) threads the bilayer. Leu-227 is a topological domain (extracellular). Residues 228–248 (LFGNTGYYVVLAWCCISIVFF) traverse the membrane as a helical segment. At 249-278 (MIRTLRLKILSEAAAEGVLVRGARNQLRMY) the chain is on the cytoplasmic side. A helical membrane pass occupies residues 279 to 299 (LTMAIAAVQPIFMYWLTYHLV). Arg-300 is a topological domain (extracellular).

Belongs to the YIF1 family.

The protein localises to the endoplasmic reticulum membrane. It is found in the golgi apparatus membrane. The protein resides in the endoplasmic reticulum-Golgi intermediate compartment membrane. Its function is as follows. Functions in endoplasmic reticulum to Golgi vesicle-mediated transport and regulates the proper organization of the endoplasmic reticulum and the Golgi. Plays a key role in targeting to neuronal dendrites receptors such as HTR1A. Plays also a role in primary cilium and sperm flagellum assembly probably through protein transport to these compartments. The protein is Protein YIF1B-B (yif1b-b) of Xenopus laevis (African clawed frog).